A 474-amino-acid chain; its full sequence is MSRLVVVSNRIAPPDEHAASAGGLAVGILGALKAAGGLWFGWSGETGNEDQPLKKVKKGNITWASFNLSEQDLDEYYNQFSNAVLWPAFHYRLDLVQFQRPAWDGYLRVNALLADKLLPLLQDDDIIWIHDYHLLPFAHELRKRGVNNRIGFFLHIPFPTPEIFNALPTYDTLLEQLCDYDLLGFQTENDRLAFLDCLSNLTRVTTRSAKSHTAWGKAFRTEVYPIGIEPKEIAKQAAGPLPPKLAQLKAELKNVQNIFSVERLDYSKGLPERFLAYEALLEKYPQHHGKIRYTQIAPTSRGDVQAYQDIRHQLENEAGRINGKYGQLGWTPLYYLNQHFDRKLLMKIFRYSDVGLVTPLRDGMNLVAKEYVAAQDPANPGVLVLSQFAGAANELTSALIVNPYDRDEVAVALDRALTMSLAERISRHAEMLDVIVKNDINHWQECFISDLKQIVPRSAESQQRDKVATFPKLV.

Position 10 (Arg10) interacts with D-glucose 6-phosphate. Position 22 to 23 (22 to 23 (GG)) interacts with UDP-alpha-D-glucose. Positions 77 and 131 each coordinate D-glucose 6-phosphate. Residues Arg263 and Lys268 each coordinate UDP-alpha-D-glucose. Arg301 contacts D-glucose 6-phosphate. UDP-alpha-D-glucose is bound by residues Phe340 and 366–370 (LVAKE).

This sequence belongs to the glycosyltransferase 20 family. Homotetramer.

The catalysed reaction is D-glucose 6-phosphate + UDP-alpha-D-glucose = alpha,alpha-trehalose 6-phosphate + UDP + H(+). It participates in glycan biosynthesis; trehalose biosynthesis. In terms of biological role, probably involved in the osmoprotection via the biosynthesis of trehalose. Catalyzes the transfer of glucose from UDP-alpha-D-glucose (UDP-Glc) to D-glucose 6-phosphate (Glc-6-P) to form trehalose-6-phosphate. Acts with retention of the anomeric configuration of the UDP-sugar donor. In Escherichia coli O157:H7, this protein is Trehalose-6-phosphate synthase.